The following is a 421-amino-acid chain: Phosphoglycerate kinase (421 aa).

The (2R)-3-phosphoglycerate site is built by valine 23, aspartate 24, phenylalanine 25, asparagine 26, glutamine 41, arginine 42, serine 65, histidine 66, glycine 68, arginine 69, leucine 124, arginine 125, histidine 172, and arginine 173. ADP is bound at residue glycine 216. Glycine 216 contributes to the CDP binding site. Lysine 218 provides a ligand contact to AMP. Residue aspartate 221 participates in CDP binding. Residue aspartate 221 coordinates Mg(2+). AMP is bound at residue lysine 222. Residue lysine 222 participates in ATP binding. Glycine 240 is a binding site for ADP. Glycine 240 contacts CDP. Residues glycine 241 and glycine 315 each contribute to the AMP site. Residues glycine 241 and glycine 315 each coordinate ATP. CDP-binding residues include glycine 340 and phenylalanine 345. ADP is bound at residue phenylalanine 345. Glutamate 346 contributes to the AMP binding site. ATP contacts are provided by glutamate 346, aspartate 377, and threonine 378. Aspartate 377 contacts Mg(2+).

It belongs to the phosphoglycerate kinase family. As to quaternary structure, monomer. Mg(2+) is required as a cofactor.

The protein localises to the cytoplasm. It localises to the mitochondrion. The catalysed reaction is (2R)-3-phosphoglycerate + ATP = (2R)-3-phospho-glyceroyl phosphate + ADP. It functions in the pathway carbohydrate degradation; glycolysis; pyruvate from D-glyceraldehyde 3-phosphate: step 2/5. In terms of biological role, catalyzes one of the two ATP producing reactions in the glycolytic pathway via the reversible conversion of 1,3-diphosphoglycerate to 3-phosphoglycerate. Both L- and D- forms of purine and pyrimidine nucleotides can be used as substrates, but the activity is much lower on pyrimidines. Negatively regulates the biosynthesis of acetyl-CoA from pyruvate in the mitochondrion. The chain is Phosphoglycerate kinase (pgkA) from Emericella nidulans (strain FGSC A4 / ATCC 38163 / CBS 112.46 / NRRL 194 / M139) (Aspergillus nidulans).